A 230-amino-acid chain; its full sequence is Fibrillarin-like rRNA/tRNA 2'-O-methyltransferase (230 aa).

S-adenosyl-L-methionine-binding positions include 87-88 (TT), 105-106 (EF), 130-131 (DA), and 150-153 (DVAQ).

The protein belongs to the methyltransferase superfamily. Fibrillarin family. In terms of assembly, interacts with nop5. Component of box C/D small ribonucleoprotein (sRNP) particles that contain rpl7ae, FlpA and nop5, plus a guide RNA.

In terms of biological role, involved in pre-rRNA and tRNA processing. Utilizes the methyl donor S-adenosyl-L-methionine to catalyze the site-specific 2'-hydroxyl methylation of ribose moieties in rRNA and tRNA. Site specificity is provided by a guide RNA that base pairs with the substrate. Methylation occurs at a characteristic distance from the sequence involved in base pairing with the guide RNA. This is Fibrillarin-like rRNA/tRNA 2'-O-methyltransferase from Methanococcus maripaludis (strain C5 / ATCC BAA-1333).